A 309-amino-acid chain; its full sequence is Olfactory receptor 5B21 (309 aa).

Over 1–26 (MENSTEVTEFILLGLTDDPNLQIPLL) the chain is Extracellular. N-linked (GlcNAc...) asparagine glycosylation is present at asparagine 3. A helical membrane pass occupies residues 27 to 47 (LAFLFIYLITLLGNGGMMVII). The Cytoplasmic segment spans residues 48–55 (HSDSHLHT). The chain crosses the membrane as a helical span at residues 56–76 (PMYFFLSNLSLVDLGYSSAVA). At 77 to 95 (PKTVAALRSGDKAISYDGC) the chain is on the extracellular side. Cysteine 95 and cysteine 177 are oxidised to a cystine. Residues 96–116 (AAQFFFFVGFATVECYLLASM) traverse the membrane as a helical segment. Topologically, residues 117-137 (AYDRHAAVCRPLHYTTTMTAG) are cytoplasmic. Residues 138 to 158 (VCALLATGSYVSGFLNASIHA) traverse the membrane as a helical segment. Residues 159 to 199 (AGTFRLSFCGSNEINHFFCDIPPLLALSCSDTRISKLVVFV) are Extracellular-facing. A helical membrane pass occupies residues 200 to 220 (AGFNVFFTLLVILISYFFICI). Residues 221-235 (TIQRMHSAEGQKKVF) lie on the Cytoplasmic side of the membrane. The chain crosses the membrane as a helical span at residues 236 to 256 (STCASHLTALSIFYGTIIFMY). Residues 257-270 (LQPNSSQSVDTDKI) are Extracellular-facing. N-linked (GlcNAc...) asparagine glycosylation is present at asparagine 260. Residues 271–291 (ASVFYTVVIPMLNPLIYSLRN) form a helical membrane-spanning segment. The Cytoplasmic portion of the chain corresponds to 292–309 (KEVKSALWKILNKLYPQY).

Belongs to the G-protein coupled receptor 1 family.

The protein localises to the cell membrane. Functionally, odorant receptor. The polypeptide is Olfactory receptor 5B21 (Homo sapiens (Human)).